Here is a 504-residue protein sequence, read N- to C-terminus: Kinesin light chain 3 (504 aa).

Residues 90 to 150 adopt a coiled-coil conformation; that stretch reads ALSAHVGALE…EEEKRHLEFL (61 aa). Residues 153–197 are disordered; sequence LRQYDPPAESQQSESPPRRDSLASLFPSEEEERKGPEAAGAAAAQ. The span at 158 to 167 shows a compositional bias: low complexity; sequence PPAESQQSES. Phosphoserine is present on serine 173. 5 TPR repeats span residues 207-240, 249-282, 291-324, 333-366, and 375-408; these read LRTL…LERS, ATML…REQT, AATL…REKV, AKQL…YEAL, and AKTK…EDLP. The disordered stretch occupies residues 411–438; that stretch reads LGAPNTGTAGDAEQALRRSSSLSKIRES. At serine 466 the chain carries Phosphoserine. A disordered region spans residues 472–504; that stretch reads VDAPRAPGTQFPSWHLDKAPRTLSASTQDLSPH. The span at 494–504 shows a compositional bias: polar residues; the sequence is LSASTQDLSPH. Threonine 498 is subject to Phosphothreonine. Serine 502 is subject to Phosphoserine.

It belongs to the kinesin light chain family. In terms of assembly, oligomer composed of two heavy chains and two light chains. Associates with microtubulin in an ATP-dependent manner. Interacts with KIF5C. Interacts with ODF1. Interacts with LRGUK. Interacts with VDAC2.

The protein localises to the cytoplasm. Its subcellular location is the cytoskeleton. It localises to the mitochondrion. Functionally, kinesin is a microtubule-associated force-producing protein that may play a role in organelle transport. Plays a role during spermiogenesis in the development of the sperm tail midpiece and in the normal function of spermatozoa. May play a role in the formation of the mitochondrial sheath formation in the developing spermatid midpiece. The sequence is that of Kinesin light chain 3 (KLC3) from Homo sapiens (Human).